The sequence spans 157 residues: SsrA-binding protein (157 aa).

The disordered stretch occupies residues 132 to 157 (VHDKRQAQKDKDWAREKDRLFKKAYK). Positions 135–157 (KRQAQKDKDWAREKDRLFKKAYK) are enriched in basic and acidic residues.

The protein belongs to the SmpB family.

The protein localises to the cytoplasm. Required for rescue of stalled ribosomes mediated by trans-translation. Binds to transfer-messenger RNA (tmRNA), required for stable association of tmRNA with ribosomes. tmRNA and SmpB together mimic tRNA shape, replacing the anticodon stem-loop with SmpB. tmRNA is encoded by the ssrA gene; the 2 termini fold to resemble tRNA(Ala) and it encodes a 'tag peptide', a short internal open reading frame. During trans-translation Ala-aminoacylated tmRNA acts like a tRNA, entering the A-site of stalled ribosomes, displacing the stalled mRNA. The ribosome then switches to translate the ORF on the tmRNA; the nascent peptide is terminated with the 'tag peptide' encoded by the tmRNA and targeted for degradation. The ribosome is freed to recommence translation, which seems to be the essential function of trans-translation. The polypeptide is SsrA-binding protein (Francisella tularensis subsp. tularensis (strain FSC 198)).